The chain runs to 237 residues: Histone H1E (237 aa).

Positions 1 to 21 (MSDPAQEVEAPVEAAPVASSP) are enriched in low complexity. 2 disordered regions span residues 1–56 (MSDP…PVSE) and 109–237 (LQAK…KKAK). Residues 26–42 (EKAPKAPKAEKPKSDKP) are compositionally biased toward basic and acidic residues. In terms of domain architecture, H15 spans 50 to 124 (THPPVSEMVV…GASGSFKLPP (75 aa)). Over residues 182-195 (AKPAAKKAAAPKPK) the composition is skewed to low complexity. Positions 200 to 209 (PKKEVKPKKE) are enriched in basic and acidic residues. A compositionally biased stretch (basic residues) spans 210–237 (AKPKKAAAKPAKKPAAKPAKKPAAKKAK).

It belongs to the histone H1/H5 family.

The protein resides in the nucleus. The protein localises to the chromosome. Its function is as follows. Histones H1 are necessary for the condensation of nucleosome chains into higher-order structures. In Chironomus tentans (Midge), this protein is Histone H1E.